A 368-amino-acid polypeptide reads, in one-letter code: MSAQSVEEDSILIIPTPDEEEKILRVKLEEDPDGEEGSSIPWNHLPDPEIFRQRFRQFGYQDSPGPREAVSQLRELCRLWLRPETHTKEQILELVVLEQFVAILPKELQTWVRDHHPENGEEAVTVLEDLESELDDPGQPVSLRRRKREVLVEDMVSQEEAQGLPSSELDAVENQLKWASWELHSLRHCDDDGRTENGALAPKQELPSAVESHEVPGTLNMGVPQIFKYGETCFPKGRFERKRNPSRKKQHICDECGKHFSQGSALILHQRIHSGEKPYGCVECGKAFSRSSILVQHQRVHTGEKPYKCLECGKAFSQNSGLINHQRIHTGEKPYECVQCGKSYSQSSNLFRHQRRHNAEKLLNVVKV.

A Glycyl lysine isopeptide (Lys-Gly) (interchain with G-Cter in SUMO2) cross-link involves residue lysine 22. Residue lysine 27 forms a Glycyl lysine isopeptide (Lys-Gly) (interchain with G-Cter in SUMO1); alternate linkage. Residue lysine 27 forms a Glycyl lysine isopeptide (Lys-Gly) (interchain with G-Cter in SUMO2); alternate linkage. The SCAN box domain maps to 52 to 134 (RQRFRQFGYQ…TVLEDLESEL (83 aa)). Phosphoserine is present on residues serine 132 and serine 142. Residues lysine 147, lysine 177, and lysine 236 each participate in a glycyl lysine isopeptide (Lys-Gly) (interchain with G-Cter in SUMO2) cross-link. A C2H2-type 1 zinc finger spans residues 251 to 273 (HICDECGKHFSQGSALILHQRIH). The interval 251 to 301 (HICDECGKHFSQGSALILHQRIHSGEKPYGCVECGKAFSRSSILVQHQRVH) is necessary and sufficient for nuclear localization. At serine 274 the chain carries Phosphoserine. Glycyl lysine isopeptide (Lys-Gly) (interchain with G-Cter in SUMO2) cross-links involve residues lysine 277 and lysine 286. C2H2-type zinc fingers lie at residues 279 to 301 (YGCV…QRVH), 307 to 329 (YKCL…QRIH), and 335 to 357 (YECV…QRRH). A Phosphoserine modification is found at serine 292. Tyrosine 335 is subject to Phosphotyrosine. Glycyl lysine isopeptide (Lys-Gly) (interchain with G-Cter in SUMO2) cross-links involve residues lysine 361 and lysine 367.

It belongs to the krueppel C2H2-type zinc-finger protein family. Sumoylated.

Its subcellular location is the nucleus. In terms of biological role, transcription factor required for myelination of differentiated oligodendrocytes. Required for the conversion of oligodendrocytes from the premyelinating to the myelinating state. In the developing central nervous system (CNS), involved in the maintenance in the progenitor stage by promoting the cell cycle. Specifically binds to the 5'-TCAT-3' DNA sequence. Has transcription repressor activity in vitro. This Pongo abelii (Sumatran orangutan) protein is Zinc finger protein 24 (ZNF24).